A 600-amino-acid chain; its full sequence is Proline dehydrogenase 1, mitochondrial (600 aa).

A disordered region spans residues 155–177 (AEHKEMESCTSAAERDGSGTNKR). An N6-acetyllysine mark is found at Lys368 and Lys486.

The protein belongs to the proline oxidase family. The cofactor is FAD. As to expression, expressed in lung, skeletal muscle and brain, to a lesser extent in heart and kidney, and weakly in liver, placenta and pancreas.

It is found in the mitochondrion matrix. The enzyme catalyses L-proline + a quinone = (S)-1-pyrroline-5-carboxylate + a quinol + H(+). It participates in amino-acid degradation; L-proline degradation into L-glutamate; L-glutamate from L-proline: step 1/2. In terms of biological role, converts proline to delta-1-pyrroline-5-carboxylate. In Homo sapiens (Human), this protein is Proline dehydrogenase 1, mitochondrial.